Here is a 78-residue protein sequence, read N- to C-terminus: NAD(P)H-quinone oxidoreductase subunit O (78 aa).

The protein belongs to the complex I NdhO subunit family. As to quaternary structure, NDH-1 can be composed of about 15 different subunits; different subcomplexes with different compositions have been identified which probably have different functions.

The protein localises to the cellular thylakoid membrane. The catalysed reaction is a plastoquinone + NADH + (n+1) H(+)(in) = a plastoquinol + NAD(+) + n H(+)(out). The enzyme catalyses a plastoquinone + NADPH + (n+1) H(+)(in) = a plastoquinol + NADP(+) + n H(+)(out). NDH-1 shuttles electrons from an unknown electron donor, via FMN and iron-sulfur (Fe-S) centers, to quinones in the respiratory and/or the photosynthetic chain. The immediate electron acceptor for the enzyme in this species is believed to be plastoquinone. Couples the redox reaction to proton translocation, and thus conserves the redox energy in a proton gradient. Cyanobacterial NDH-1 also plays a role in inorganic carbon-concentration. The polypeptide is NAD(P)H-quinone oxidoreductase subunit O (Prochlorococcus marinus (strain MIT 9301)).